The following is a 508-amino-acid chain: Photosystem II CP47 reaction center protein (508 aa).

6 helical membrane passes run 21–36, 101–115, 140–156, 203–218, 237–252, and 457–472; these read AVHIMHTALVAGWAGS, IVFSGLCFLAAIWHW, GIHLFLSGVACFGFGTF, IAAGTLGILAGLFHLS, VLSSSIAAVFFAAFVV, and SFALLFFFGHIWHGAR.

This sequence belongs to the PsbB/PsbC family. PsbB subfamily. As to quaternary structure, PSII is composed of 1 copy each of membrane proteins PsbA, PsbB, PsbC, PsbD, PsbE, PsbF, PsbH, PsbI, PsbJ, PsbK, PsbL, PsbM, PsbT, PsbX, PsbY, PsbZ, Psb30/Ycf12, at least 3 peripheral proteins of the oxygen-evolving complex and a large number of cofactors. It forms dimeric complexes. The cofactor is Binds multiple chlorophylls. PSII binds additional chlorophylls, carotenoids and specific lipids..

It localises to the plastid. The protein resides in the chloroplast thylakoid membrane. One of the components of the core complex of photosystem II (PSII). It binds chlorophyll and helps catalyze the primary light-induced photochemical processes of PSII. PSII is a light-driven water:plastoquinone oxidoreductase, using light energy to abstract electrons from H(2)O, generating O(2) and a proton gradient subsequently used for ATP formation. This is Photosystem II CP47 reaction center protein from Citrus sinensis (Sweet orange).